Reading from the N-terminus, the 395-residue chain is Vomeronasal type-1 receptor 2 (395 aa).

A helical transmembrane segment spans residues 12 to 32 (LYPINISAAWHLGPLPVSCFV). The Extracellular portion of the chain corresponds to 33–51 (SNKYQCSLAFGATTGLRVL). Residues 52 to 72 (VVVVPQTQLSFLSSLCLVSLF) traverse the membrane as a helical segment. Residues 73–93 (LHSLVSAHGEKPTKPVGLDPT) are Cytoplasmic-facing. The helical transmembrane segment at 94–114 (LFQVVVGILGNFSLLYYYMFL) threads the bilayer. The Extracellular portion of the chain corresponds to 115–170 (YFRGYKPRSTDLILRHLTVADSLVILSKRIPETMATFGLKHFDNYFGCKFLLYAHR). Residues 171–191 (VGRGVSIGSTCLLSVFQVITI) form a helical membrane-spanning segment. Topologically, residues 192–208 (NPRNSRWAEMKVKAPTY) are cytoplasmic. A helical transmembrane segment spans residues 209–229 (IGLSNILCWAFHMLVNAIFPI). The Extracellular portion of the chain corresponds to 230–267 (YTTGKWSNNNITKKGDLGYCSAPLSDEVTKSVYAALTS). A glycan (N-linked (GlcNAc...) asparagine) is linked at Asn239. A helical membrane pass occupies residues 268–288 (FHDVLCLGLMLWASSSIVLVL). Residues 289-316 (YRHKQQVQHICRNNLYPNSSPGNRAIQS) are Cytoplasmic-facing. Residues 317–337 (ILALVSTFALCYALSFITYVY) form a helical membrane-spanning segment. The Extracellular segment spans residues 338 to 346 (LALFDNSSW). A glycan (N-linked (GlcNAc...) asparagine) is linked at Asn343. A helical transmembrane segment spans residues 347–367 (WLVNTAALIIACFPTISPFVL). Residues 368–395 (MCRDPSRSRLCSICCRRNRRFFHDFRKM) lie on the Cytoplasmic side of the membrane.

The protein belongs to the G-protein coupled receptor 1 family.

It is found in the cell membrane. In terms of biological role, putative pheromone receptor. The protein is Vomeronasal type-1 receptor 2 (VN1R2) of Homo sapiens (Human).